Reading from the N-terminus, the 412-residue chain is Multifunctional CCA protein (412 aa).

ATP contacts are provided by Gly8 and Arg11. Residues Gly8 and Arg11 each coordinate CTP. Mg(2+) contacts are provided by Glu21 and Asp23. ATP-binding residues include Arg91, Arg137, and Arg140. 3 residues coordinate CTP: Arg91, Arg137, and Arg140. An HD domain is found at 228–329 (CGIHTLMSLQ…WRLLQRLDVL (102 aa)).

It belongs to the tRNA nucleotidyltransferase/poly(A) polymerase family. Bacterial CCA-adding enzyme type 1 subfamily. As to quaternary structure, monomer. Can also form homodimers and oligomers. The cofactor is Mg(2+). Ni(2+) serves as cofactor.

The catalysed reaction is a tRNA precursor + 2 CTP + ATP = a tRNA with a 3' CCA end + 3 diphosphate. It carries out the reaction a tRNA with a 3' CCA end + 2 CTP + ATP = a tRNA with a 3' CCACCA end + 3 diphosphate. Catalyzes the addition and repair of the essential 3'-terminal CCA sequence in tRNAs without using a nucleic acid template. Adds these three nucleotides in the order of C, C, and A to the tRNA nucleotide-73, using CTP and ATP as substrates and producing inorganic pyrophosphate. tRNA 3'-terminal CCA addition is required both for tRNA processing and repair. Also involved in tRNA surveillance by mediating tandem CCA addition to generate a CCACCA at the 3' terminus of unstable tRNAs. While stable tRNAs receive only 3'-terminal CCA, unstable tRNAs are marked with CCACCA and rapidly degraded. The chain is Multifunctional CCA protein from Acinetobacter baumannii (strain SDF).